Reading from the N-terminus, the 419-residue chain is MNIIDELEWRGAVNQQTDEEGLRKLVEEKKISLYCGVDPTGDSMHIGHLIPFMMMKRFQLAGHQPVILIGGATGTIGDPSGRQSERQLQTLEVVQHNVDALTAQMKKLFDFGGNSEVKMVNNYDWTHEINIIEFLRDYGKNFSINSMLAKDIVASRLDTGISFTEFTYQILQAMDFHHLYTKEDVQLQIGGSDQWGNITSGLDLIRKLEGHEAKVFGLTIPLLLKSDGTKFGKSAGGAVWLDPEKTTPFEFYQFWVNTDDRDVVKYLKYFTFLTKERIDELAVKVETEPHKREAQKVLAEEMTKFVHGEEALLQAVKITAALFSGDIKSLTADEIEQGFKEMPTFQSSKETKNIVEWLVDLGIEPSRRQAREDINNGAISMNGEKVTDVGTDVTVENSFDGRFIIIRKGKKNYSLVKLG.

An L-tyrosine-binding site is contributed by tyrosine 34. The 'HIGH' region signature appears at 39-48 (PTGDSMHIGH). L-tyrosine contacts are provided by tyrosine 168 and glutamine 172. The 'KMSKS' region motif lies at 230–234 (KFGKS). Position 233 (lysine 233) interacts with ATP. The region spanning 352–418 (KNIVEWLVDL…GKKNYSLVKL (67 aa)) is the S4 RNA-binding domain.

This sequence belongs to the class-I aminoacyl-tRNA synthetase family. TyrS type 1 subfamily. As to quaternary structure, homodimer.

The protein resides in the cytoplasm. The catalysed reaction is tRNA(Tyr) + L-tyrosine + ATP = L-tyrosyl-tRNA(Tyr) + AMP + diphosphate + H(+). Functionally, catalyzes the attachment of tyrosine to tRNA(Tyr) in a two-step reaction: tyrosine is first activated by ATP to form Tyr-AMP and then transferred to the acceptor end of tRNA(Tyr). The polypeptide is Tyrosine--tRNA ligase 2 (Bacillus thuringiensis subsp. konkukian (strain 97-27)).